We begin with the raw amino-acid sequence, 75 residues long: Penaeidin-3m (75 aa).

Residues 1 to 19 (MRLVVCLVFLASFALVCQG) form the signal peptide. Residue Gln20 is modified to Pyrrolidone carboxylic acid. 3 disulfide bridges follow: Cys44–Cys59, Cys48–Cys66, and Cys60–Cys67. The residue at position 74 (Ser74) is a Serine amide.

This sequence belongs to the penaeidin family.

The protein resides in the cytoplasmic granule. Its function is as follows. Antibacterial and antifungal activity. Presents chitin-binding activity. The polypeptide is Penaeidin-3m (Penaeus setiferus (Atlantic white shrimp)).